Reading from the N-terminus, the 315-residue chain is Porphobilinogen deaminase (315 aa).

S-(dipyrrolylmethanemethyl)cysteine is present on C234.

Belongs to the HMBS family. Monomer. It depends on dipyrromethane as a cofactor.

The catalysed reaction is 4 porphobilinogen + H2O = hydroxymethylbilane + 4 NH4(+). It functions in the pathway porphyrin-containing compound metabolism; protoporphyrin-IX biosynthesis; coproporphyrinogen-III from 5-aminolevulinate: step 2/4. Tetrapolymerization of the monopyrrole PBG into the hydroxymethylbilane pre-uroporphyrinogen in several discrete steps. The polypeptide is Porphobilinogen deaminase (Mycolicibacterium paratuberculosis (strain ATCC BAA-968 / K-10) (Mycobacterium paratuberculosis)).